The following is a 930-amino-acid chain: Isoleucine--tRNA ligase (930 aa).

Residues 57 to 67 (PYANGNIHVGH) carry the 'HIGH' region motif. Glu-554 is a binding site for L-isoleucyl-5'-AMP. The short motif at 595–599 (KMSKS) is the 'KMSKS' region element. Lys-598 is a binding site for ATP. 4 residues coordinate Zn(2+): Cys-888, Cys-891, Cys-908, and Cys-911.

This sequence belongs to the class-I aminoacyl-tRNA synthetase family. IleS type 1 subfamily. Monomer. Requires Zn(2+) as cofactor.

Its subcellular location is the cytoplasm. It catalyses the reaction tRNA(Ile) + L-isoleucine + ATP = L-isoleucyl-tRNA(Ile) + AMP + diphosphate. Its function is as follows. Catalyzes the attachment of isoleucine to tRNA(Ile). As IleRS can inadvertently accommodate and process structurally similar amino acids such as valine, to avoid such errors it has two additional distinct tRNA(Ile)-dependent editing activities. One activity is designated as 'pretransfer' editing and involves the hydrolysis of activated Val-AMP. The other activity is designated 'posttransfer' editing and involves deacylation of mischarged Val-tRNA(Ile). This is Isoleucine--tRNA ligase from Streptococcus pneumoniae (strain ATCC BAA-255 / R6).